A 428-amino-acid polypeptide reads, in one-letter code: Acylglycerol kinase, mitochondrial (428 aa).

Positions serine 18–glycine 34 are hydrophobic. A DAGKc domain is found at serine 61 to glutamine 202.

This sequence belongs to the AGK family. Component of the TIM22 complex. Mg(2+) serves as cofactor.

It localises to the mitochondrion inner membrane. The protein resides in the mitochondrion intermembrane space. It catalyses the reaction a monoacylglycerol + ATP = a monoacyl-sn-glycero-3-phosphate + ADP + H(+). It carries out the reaction a 1,2-diacyl-sn-glycerol + ATP = a 1,2-diacyl-sn-glycero-3-phosphate + ADP + H(+). The catalysed reaction is an N-acylsphing-4-enine + ATP = an N-acylsphing-4-enine 1-phosphate + ADP + H(+). The enzyme catalyses 1-(9Z-octadecenoyl)-sn-glycerol + ATP = 1-(9Z-octadecenoyl)-sn-glycero-3-phosphate + ADP + H(+). It catalyses the reaction 1,2-di-(9Z-octadecenoyl)-sn-glycerol + ATP = 1,2-di-(9Z-octadecenoyl)-sn-glycero-3-phosphate + ADP + H(+). It carries out the reaction a 1-acyl-sn-glycerol + ATP = a 1-acyl-sn-glycero-3-phosphate + ADP + H(+). The catalysed reaction is 1-hexadecanoyl-sn-glycerol + ATP = 1-hexadecanoyl-sn-glycero-3-phosphate + ADP + H(+). The enzyme catalyses a 2-acylglycerol + ATP = a 2-acyl-sn-glycerol 3-phosphate + ADP + H(+). It catalyses the reaction 2-(5Z,8Z,11Z,14Z-eicosatetraenoyl)-glycerol + ATP = 2-(5Z,8Z,11Z,14Z-eicosatetraenoyl)-sn-glycero-3-phosphate + ADP + H(+). It carries out the reaction 1-(5Z,8Z,11Z,14Z-eicosatetraenoyl)-sn-glycerol + ATP = 1-(5Z,8Z,11Z,14Z-eicosatetraenoyl)-sn-glycero-3-phosphate + ADP + H(+). The catalysed reaction is N-(hexanoyl)sphing-4-enine + ATP = N-hexanoylsphing-4-enine 1-phosphate + ADP + H(+). The protein operates within lipid metabolism; glycerolipid metabolism. In terms of biological role, lipid kinase that can phosphorylate both monoacylglycerol and diacylglycerol to form lysophosphatidic acid (LPA) and phosphatidic acid (PA), respectively. Phosphorylates ceramide but not sphingosine. Phosphorylates 1,2-dioleoylglycerol more rapidly than 2,3-dioleoylglycerol. Independently of its lipid kinase activity, acts as a component of the TIM22 complex. The TIM22 complex mediates the import and insertion of multi-pass transmembrane proteins into the mitochondrial inner membrane by forming a twin-pore translocase that uses the membrane potential as the external driving force. This chain is Acylglycerol kinase, mitochondrial, found in Xenopus laevis (African clawed frog).